An 89-amino-acid polypeptide reads, in one-letter code: Small ribosomal subunit protein uS15 (89 aa).

The protein belongs to the universal ribosomal protein uS15 family. Part of the 30S ribosomal subunit. Forms a bridge to the 50S subunit in the 70S ribosome, contacting the 23S rRNA.

One of the primary rRNA binding proteins, it binds directly to 16S rRNA where it helps nucleate assembly of the platform of the 30S subunit by binding and bridging several RNA helices of the 16S rRNA. Its function is as follows. Forms an intersubunit bridge (bridge B4) with the 23S rRNA of the 50S subunit in the ribosome. This is Small ribosomal subunit protein uS15 from Carboxydothermus hydrogenoformans (strain ATCC BAA-161 / DSM 6008 / Z-2901).